We begin with the raw amino-acid sequence, 557 residues long: Warthog protein 4 (557 aa).

An N-terminal signal peptide occupies residues 1–20 (MRFSLLALVLLSSSYKFTYG). The interval 272–308 (QETNPQPPPPPGQQGGFVQPQGFQPQGGFQPQGFQPQ) is disordered. A compositionally biased stretch (low complexity) spans 287-308 (GFVQPQGFQPQGGFQPQGFQPQ).

Belongs to the hedgehog family. Post-translationally, the C-terminal domain displays an autoproteolysis activity.

Its subcellular location is the secreted. It localises to the cell surface. It is found in the cell membrane. The protein localises to the extracellular space. Functionally, intercellular signal essential for a variety of patterning events during development. The protein is Warthog protein 4 (wrt-4) of Caenorhabditis elegans.